Consider the following 232-residue polypeptide: Large ribosomal subunit protein uL10c (232 aa).

The transit peptide at 1–52 (MESTLFLSKPLPTTIKTTTHSLSSVYPNPFKPNNLTFPRTTHKHPTTTTITA) directs the protein to the chloroplast.

The protein belongs to the universal ribosomal protein uL10 family. Component of the chloroplast large ribosomal subunit (LSU). Mature 70S chloroplast ribosomes of higher plants consist of a small (30S) and a large (50S) subunit. The 30S small subunit contains 1 molecule of ribosomal RNA (16S rRNA) and 24 different proteins. The 50S large subunit contains 3 rRNA molecules (23S, 5S and 4.5S rRNA) and 33 different proteins.

Its subcellular location is the plastid. The protein localises to the chloroplast. In terms of biological role, component of the chloroplast ribosome (chloro-ribosome), a dedicated translation machinery responsible for the synthesis of chloroplast genome-encoded proteins, including proteins of the transcription and translation machinery and components of the photosynthetic apparatus. This Spinacia oleracea (Spinach) protein is Large ribosomal subunit protein uL10c (RPL10).